Reading from the N-terminus, the 89-residue chain is Small ribosomal subunit protein uS14A (89 aa).

This sequence belongs to the universal ribosomal protein uS14 family. Part of the 30S ribosomal subunit. Contacts proteins S3 and S10.

Its function is as follows. Binds 16S rRNA, required for the assembly of 30S particles and may also be responsible for determining the conformation of the 16S rRNA at the A site. This Staphylococcus aureus (strain MRSA252) protein is Small ribosomal subunit protein uS14A.